The primary structure comprises 292 residues: NADH-cytochrome b5 reductase 1 (292 aa).

A helical membrane pass occupies residues 12–32; the sequence is ALLVVGTAIFAVLVGAKFLGG. The FAD-binding FR-type domain occupies 43 to 148; the sequence is TEFQNFVLKE…RGPKGAMVYT (106 aa). Residues 128–143 and 154–191 contribute to the FAD site; these read TTLKIGDNMKVRGPKG and HIGMIAGGTGITPMLQIIKAIIRNRPRNGGNDTTQVDL.

It belongs to the flavoprotein pyridine nucleotide cytochrome reductase family. Monomer. Component of the 2-(3-amino-3-carboxypropyl)histidine synthase complex composed of dph1, dph2, dph3 and a NADH-dependent reductase, predominantly cbr1. FAD is required as a cofactor.

Its subcellular location is the mitochondrion outer membrane. The enzyme catalyses 2 Fe(III)-[cytochrome b5] + NADH = 2 Fe(II)-[cytochrome b5] + NAD(+) + H(+). The catalysed reaction is 2 Fe(3+)-[Dph3] + NADH = 2 Fe(2+)-[Dph3] + NAD(+) + H(+). It participates in protein modification; peptidyl-diphthamide biosynthesis. NADH-dependent reductase for dph3 and cytochrome b5. Required for the first step of diphthamide biosynthesis, a post-translational modification of histidine which occurs in elongation factor 2. Dph1 and dph2 transfer a 3-amino-3-carboxypropyl (ACP) group from S-adenosyl-L-methionine (SAM) to a histidine residue, the reaction is assisted by a reduction system comprising dph3 and a NADH-dependent reductase, predominantly cbr1. By reducing dph3, also involved in the formation of the tRNA wobble base modification mcm5s 2U (5-methoxycarbonylmethyl-2-thiouridine), mediated by the elongator complex. The cytochrome b5/NADH cytochrome b5 reductase electron transfer system supports the catalytic activity of several sterol biosynthetic enzymes. The chain is NADH-cytochrome b5 reductase 1 (cbr1) from Aspergillus oryzae (strain ATCC 42149 / RIB 40) (Yellow koji mold).